A 628-amino-acid chain; its full sequence is Forkhead box protein O (628 aa).

T50 is modified (phosphothreonine; by PKB/AKT1). Residue S81 is modified to Phosphoserine. The segment at residues 101 to 207 (WGNLSYADLI…ETSRYEKRRG (107 aa)) is a DNA-binding region (fork-head). 2 disordered regions span residues 188–210 (KSVR…GRAK) and 223–270 (GLND…SSCG). S196 carries the post-translational modification Phosphoserine; by PKB/AKT1. Composition is skewed to polar residues over residues 227-236 (ATPSPSSSVS) and 261-270 (RASSNASSCG). S264 is subject to Phosphoserine; by PKB/AKT1. Phosphoserine is present on residues S267, S268, and S273. 2 disordered regions span residues 327–373 (SAAS…SLQP) and 398–451 (NSVT…QQQQ). Over residues 334–343 (TQPPPPPYPA) the composition is skewed to pro residues. Over residues 344-359 (PQQQQQQQPQQQQAYT) the composition is skewed to low complexity. Residues 411-423 (SEPSSDSLNTYSN) are compositionally biased toward polar residues. The span at 438 to 451 (QQQRQQQQQQQQQQ) shows a compositional bias: low complexity.

As to quaternary structure, interacts with melt.

It localises to the cytoplasm. The protein resides in the nucleus. Its function is as follows. Transcription factor involved in the regulation of the insulin signaling pathway. Consistently activates both the downstream target Thor\d4EBP and the feedback control target InR. Involved in negative regulation of the cell cycle, modulating cell growth and proliferation. In response to cellular stresses, such as nutrient deprivation or increased levels of reactive oxygen species, foxo is activated and inhibits growth through the action of target genes such as Thor. Foxo activated in the adult fat body can regulate lifespan in adults; an insulin peptide itself may function as one secondary messenger of insulin-regulated aging. Also regulates Lip4, homolog of human acid lipases, thereby acting as a key modulator of lipid metabolism by insulin signaling and integrates insulin responses to glucose and lipid homeostasis. The polypeptide is Forkhead box protein O (Drosophila willistoni (Fruit fly)).